The sequence spans 256 residues: Small ribosomal subunit protein bS18m (256 aa).

Residues G19–Q106 form a disordered region. Residues R21–P30 are compositionally biased toward polar residues. Over residues N44 to S66 the composition is skewed to low complexity.

This sequence belongs to the bacterial ribosomal protein bS18 family. As to quaternary structure, component of the mitochondrial small ribosomal subunit (mt-SSU). Mature N.crassa 74S mitochondrial ribosomes consist of a small (37S) and a large (54S) subunit. The 37S small subunit contains a 16S ribosomal RNA (16S mt-rRNA) and 32 different proteins. The 54S large subunit contains a 23S rRNA (23S mt-rRNA) and 42 different proteins.

The protein resides in the mitochondrion. In terms of biological role, component of the mitochondrial ribosome (mitoribosome), a dedicated translation machinery responsible for the synthesis of mitochondrial genome-encoded proteins, including at least some of the essential transmembrane subunits of the mitochondrial respiratory chain. The mitoribosomes are attached to the mitochondrial inner membrane and translation products are cotranslationally integrated into the membrane. This is Small ribosomal subunit protein bS18m (rsm18) from Neurospora crassa (strain ATCC 24698 / 74-OR23-1A / CBS 708.71 / DSM 1257 / FGSC 987).